The sequence spans 354 residues: Uroporphyrinogen decarboxylase (354 aa).

Residues 27 to 31 (RQAGR), Asp77, Tyr154, Thr209, and His327 contribute to the substrate site.

The protein belongs to the uroporphyrinogen decarboxylase family. As to quaternary structure, homodimer.

The protein localises to the cytoplasm. The catalysed reaction is uroporphyrinogen III + 4 H(+) = coproporphyrinogen III + 4 CO2. The protein operates within porphyrin-containing compound metabolism; protoporphyrin-IX biosynthesis; coproporphyrinogen-III from 5-aminolevulinate: step 4/4. Its function is as follows. Catalyzes the decarboxylation of four acetate groups of uroporphyrinogen-III to yield coproporphyrinogen-III. The protein is Uroporphyrinogen decarboxylase of Psychromonas ingrahamii (strain DSM 17664 / CCUG 51855 / 37).